The primary structure comprises 231 residues: Two-component response regulator ORR1 (231 aa).

In terms of domain architecture, Response regulatory spans 9–135 (RVLLVDDSPV…DVQRLRKCSP (127 aa)). Asp68 bears the 4-aspartylphosphate mark.

Belongs to the ARR family. Type-A subfamily. Post-translationally, two-component system major event consists of a His-to-Asp phosphorelay between a sensor histidine kinase (HK) and a response regulator (RR). In plants, the His-to-Asp phosphorelay involves an additional intermediate named Histidine-containing phosphotransfer protein (HPt). This multistep phosphorelay consists of a His-Asp-His-Asp sequential transfer of a phosphate group between first a His and an Asp of the HK protein, followed by the transfer to a conserved His of the HPt protein and finally the transfer to an Asp in the receiver domain of the RR protein. Expressed in mature leaves and flowers, and at low levels in roots and shoots.

Its function is as follows. Functions as a response regulator involved in His-to-Asp phosphorelay signal transduction system. Phosphorylation of the Asp residue in the receiver domain activates the ability of the protein to promote the transcription of target genes. Type-A response regulators seem to act as negative regulators of the cytokinin signaling. This is Two-component response regulator ORR1 from Oryza sativa subsp. indica (Rice).